We begin with the raw amino-acid sequence, 366 residues long: Chorismate synthase (366 aa).

Position 48 (arginine 48) interacts with NADP(+). FMN-binding positions include 125–127 (RSS), 241–242 (NA), glycine 285, 300–304 (KPTSS), and arginine 326.

The protein belongs to the chorismate synthase family. As to quaternary structure, homotetramer. FMNH2 is required as a cofactor.

It catalyses the reaction 5-O-(1-carboxyvinyl)-3-phosphoshikimate = chorismate + phosphate. The protein operates within metabolic intermediate biosynthesis; chorismate biosynthesis; chorismate from D-erythrose 4-phosphate and phosphoenolpyruvate: step 7/7. Its function is as follows. Catalyzes the anti-1,4-elimination of the C-3 phosphate and the C-6 proR hydrogen from 5-enolpyruvylshikimate-3-phosphate (EPSP) to yield chorismate, which is the branch point compound that serves as the starting substrate for the three terminal pathways of aromatic amino acid biosynthesis. This reaction introduces a second double bond into the aromatic ring system. The sequence is that of Chorismate synthase from Ruegeria pomeroyi (strain ATCC 700808 / DSM 15171 / DSS-3) (Silicibacter pomeroyi).